Consider the following 268-residue polypeptide: 3-deoxy-manno-octulosonate cytidylyltransferase (268 aa).

Belongs to the KdsB family.

It localises to the cytoplasm. It carries out the reaction 3-deoxy-alpha-D-manno-oct-2-ulosonate + CTP = CMP-3-deoxy-beta-D-manno-octulosonate + diphosphate. The protein operates within nucleotide-sugar biosynthesis; CMP-3-deoxy-D-manno-octulosonate biosynthesis; CMP-3-deoxy-D-manno-octulosonate from 3-deoxy-D-manno-octulosonate and CTP: step 1/1. It participates in bacterial outer membrane biogenesis; lipopolysaccharide biosynthesis. Its function is as follows. Activates KDO (a required 8-carbon sugar) for incorporation into bacterial lipopolysaccharide in Gram-negative bacteria. This Psychrobacter arcticus (strain DSM 17307 / VKM B-2377 / 273-4) protein is 3-deoxy-manno-octulosonate cytidylyltransferase.